Reading from the N-terminus, the 173-residue chain is Large ribosomal subunit protein bL9 (173 aa).

Belongs to the bacterial ribosomal protein bL9 family.

Functionally, binds to the 23S rRNA. The polypeptide is Large ribosomal subunit protein bL9 (Chlamydia felis (strain Fe/C-56) (Chlamydophila felis)).